The primary structure comprises 670 residues: DNA-binding transcriptional activator HyfR (670 aa).

Residues 169–311 (DLDDLIADVA…HIADRIAIAV (143 aa)) enclose the GAF domain. A Cys-rich segment, might bind a metal cluster motif is present at residues 207-221 (CSDLSASHCACLPRC). The 230-residue stretch at 347–576 (IIYQSQAMED…LENVIERAVL (230 aa)) folds into the Sigma-54 factor interaction domain. ATP contacts are provided by residues 375 to 382 (GETGTGKE) and 438 to 447 (ADGGTLFLDE). Residues 641-660 (PRGAATRLGMKRTTLLSRMQ) constitute a DNA-binding region (H-T-H motif).

Its function is as follows. A transcriptional activator of its own operon; when overexpressed operon expression is strongly enhanced by low pH (under pH 6.0), strongly inhibited by O(2) but only weakly stimulated by fumarate. Expression in situ is very weak. This Escherichia coli (strain K12) protein is DNA-binding transcriptional activator HyfR.